A 1010-amino-acid polypeptide reads, in one-letter code: Sodium/potassium-transporting ATPase subunit alpha-3 (1010 aa).

The disordered stretch occupies residues Met-1 to Asp-21. Over Met-1–Pro-74 the chain is Cytoplasmic. The interaction with phosphoinositide-3 kinase stretch occupies residues Pro-69–Pro-71. A helical transmembrane segment spans residues Glu-75–Ala-95. Residues Ile-96–Tyr-118 lie on the Extracellular side of the membrane. A helical transmembrane segment spans residues Leu-119 to Ala-139. Residues Lys-140 to Ile-275 lie on the Cytoplasmic side of the membrane. Residues Glu-276–Val-295 traverse the membrane as a helical segment. Over Leu-296 to Ala-307 the chain is Extracellular. Residues Val-308 to Ala-325 traverse the membrane as a helical segment. The Cytoplasmic segment spans residues Thr-326–Leu-759. Asp-363 serves as the catalytic 4-aspartylphosphate intermediate. The Mg(2+) site is built by Asp-704 and Asp-708. Residues Lys-760–Leu-779 traverse the membrane as a helical segment. Topologically, residues Phe-780–Leu-789 are extracellular. Residues Gly-790–Ala-810 traverse the membrane as a helical segment. Residues Tyr-811 to Lys-830 lie on the Cytoplasmic side of the membrane. The helical transmembrane segment at Leu-831–Phe-853 threads the bilayer. Residues Phe-854–Cys-905 lie on the Extracellular side of the membrane. The chain crosses the membrane as a helical span at residues His-906–Lys-925. Over Thr-926–Asn-938 the chain is Cytoplasmic. Ser-930 carries the post-translational modification Phosphoserine; by PKA. The helical transmembrane segment at Lys-939–Tyr-957 threads the bilayer. The Extracellular portion of the chain corresponds to Cys-958 to Pro-972. The chain crosses the membrane as a helical span at residues Ser-973–Lys-993. Residues Leu-994 to Tyr-1010 lie on the Cytoplasmic side of the membrane.

The protein belongs to the cation transport ATPase (P-type) (TC 3.A.3) family. Type IIC subfamily. In terms of assembly, the sodium/potassium-transporting ATPase is composed of a catalytic alpha subunit, an auxiliary non-catalytic beta subunit and an additional regulatory subunit.

The protein localises to the cell membrane. The enzyme catalyses K(+)(out) + Na(+)(in) + ATP + H2O = K(+)(in) + Na(+)(out) + ADP + phosphate + H(+). Its function is as follows. This is the catalytic component of the active enzyme, which catalyzes the hydrolysis of ATP coupled with the exchange of sodium and potassium ions across the plasma membrane. This action creates the electrochemical gradient of sodium and potassium ions, providing the energy for active transport of various nutrients. This chain is Sodium/potassium-transporting ATPase subunit alpha-3 (ATP1A3), found in Gallus gallus (Chicken).